The sequence spans 282 residues: Heme oxygenase 1, chloroplastic (282 aa).

The transit peptide at 1-54 (MAYLAPISSSLSIFKNPQLSRFQFSSSSPNPLFLRPRIQILSMTMNKSPSLVVV) directs the protein to the chloroplast. A heme b-binding site is contributed by His86.

Belongs to the heme oxygenase family. In terms of tissue distribution, widely expressed.

Its subcellular location is the plastid. The protein resides in the chloroplast. The catalysed reaction is heme b + 3 reduced [NADPH--hemoprotein reductase] + 3 O2 = biliverdin IXalpha + CO + Fe(2+) + 3 oxidized [NADPH--hemoprotein reductase] + 3 H2O + H(+). Activated by ascorbate. Functionally, key enzyme in the synthesis of the chromophore of the phytochrome family of plant photoreceptors. Catalyzes the opening of the heme ring to form the open-chain tetrapyrrole biliverdin IX with the release of iron and carbon monoxide (CO). Produces specifically the biliverdin IX-alpha isomer. Can form complex with heme, is ferredoxin-dependent and its activity is increased in the presence of ascorbate. Plays a role in salt acclimation signaling. May affect the plastid-to-nucleus signaling pathway by perturbing tetrapyrrole synthesis. The plastid-to-nucleus signal plays an important role in the coordinated expression of both nuclear- and chloroplast-localized genes that encode photosynthesis-related proteins. In Arabidopsis thaliana (Mouse-ear cress), this protein is Heme oxygenase 1, chloroplastic (HO1).